Here is a 101-residue protein sequence, read N- to C-terminus: Urease subunit beta (101 aa).

Belongs to the urease beta subunit family. In terms of assembly, heterotrimer of UreA (gamma), UreB (beta) and UreC (alpha) subunits. Three heterotrimers associate to form the active enzyme.

The protein localises to the cytoplasm. It carries out the reaction urea + 2 H2O + H(+) = hydrogencarbonate + 2 NH4(+). It functions in the pathway nitrogen metabolism; urea degradation; CO(2) and NH(3) from urea (urease route): step 1/1. The polypeptide is Urease subunit beta (Burkholderia orbicola (strain MC0-3)).